Consider the following 158-residue polypeptide: uncharacterized protein (158 aa).

A helical transmembrane segment spans residues 33-53 (VLAAVPQLGAAKVLVLLLLGV).

It localises to the membrane. This is an uncharacterized protein from Saccharomyces cerevisiae (strain ATCC 204508 / S288c) (Baker's yeast).